A 268-amino-acid chain; its full sequence is Casein kinase II subunit beta (268 aa).

The disordered stretch occupies residues 222–268 (LSNNNQNNQNNNINNNNNNNNNNNNNNNNNNNNQQNNNNQQNNNTNK). Positions 224-268 (NNNQNNQNNNINNNNNNNNNNNNNNNNNNNNQQNNNNQQNNNTNK) are enriched in low complexity.

It belongs to the casein kinase 2 subunit beta family. As to quaternary structure, casein kinase II/CK2 is a tetramer composed of two alpha subunit and two beta subunits.

Functionally, regulatory subunit of casein kinase II/CK2. As part of the kinase complex regulates the basal catalytic activity of the alpha subunit a constitutively active serine/threonine-protein kinase that phosphorylates a large number of substrates containing acidic residues C-terminal to the phosphorylated serine or threonine. The sequence is that of Casein kinase II subunit beta (csnk2b) from Dictyostelium discoideum (Social amoeba).